Reading from the N-terminus, the 570-residue chain is La-related protein 7 (570 aa).

Methionine 1 is modified (N-acetylmethionine). Residues 1–16 (METENQKTMEESTKRK) are compositionally biased toward basic and acidic residues. 2 disordered regions span residues 1–24 (METE…KRSR) and 180–364 (LNNP…ERHK). The HTH La-type RNA-binding domain maps to 22 to 116 (RSRVKQVLAD…KPLGERPKDE (95 aa)). The 79-residue stretch at 119 to 197 (RTVYVELLPK…PRKPGIFPKT (79 aa)) folds into the RRM domain. Positions 213 to 222 (KKKKKKKGRI) are enriched in basic residues. Lysine 231 participates in a covalent cross-link: Glycyl lysine isopeptide (Lys-Gly) (interchain with G-Cter in SUMO2). Position 251 is a phosphothreonine (threonine 251). Phosphoserine is present on residues serine 253 and serine 256. Threonine 260 is modified (phosphothreonine). Residues 286–295 (RAGKRERCSA) show a composition bias toward basic and acidic residues. Residues serine 294 and serine 334 each carry the phosphoserine modification. Threonine 335 bears the Phosphothreonine mark. Over residues 340–349 (ETDRKGDSLS) the composition is skewed to basic and acidic residues. Phosphoserine is present on serine 347. The segment covering 350–363 (KVKRKHKKKHKERH) has biased composition (basic residues). Residue lysine 406 forms a Glycyl lysine isopeptide (Lys-Gly) (interchain with G-Cter in SUMO2) linkage. A xRRM domain is found at 438-551 (QFVTGVIVKI…TEKLITKAEK (114 aa)).

The protein belongs to the LARP7 family. As to quaternary structure, core component of the 7SK RNP complex, at least composed of 7SK RNA, LARP7, MEPCE, HEXIM1 (or HEXIM2) and P-TEFb (composed of CDK9 and CCNT1/cyclin-T1). Interacts with METTL16. Interacts with RBM7; upon genotoxic stress this interaction is enhanced, triggering the release of inactive P-TEFb complex from the core, yielding to P-TEFb complex activation. Associates with box C/D small nucleolar ribonucleoprotein (snoRNP) complexes.

It localises to the nucleus. The protein resides in the nucleoplasm. In terms of biological role, RNA-binding protein that specifically binds distinct small nuclear RNA (snRNAs) and regulates their processing and function. Specifically binds the 7SK snRNA (7SK RNA) and acts as a core component of the 7SK ribonucleoprotein (RNP) complex, thereby acting as a negative regulator of transcription elongation by RNA polymerase II. The 7SK RNP complex sequesters the positive transcription elongation factor b (P-TEFb) in a large inactive 7SK RNP complex preventing RNA polymerase II phosphorylation and subsequent transcriptional elongation. The 7SK RNP complex also promotes snRNA gene transcription by RNA polymerase II via interaction with the little elongation complex (LEC). LARP7 specifically binds to the highly conserved 3'-terminal U-rich stretch of 7SK RNA; on stimulation, remains associated with 7SK RNA, whereas P-TEFb is released from the complex. LARP7 also acts as a regulator of mRNA splicing fidelity by promoting U6 snRNA processing. Specifically binds U6 snRNAs and associates with a subset of box C/D RNP complexes: promotes U6 snRNA 2'-O-methylation by facilitating U6 snRNA loading into box C/D RNP complexes. U6 snRNA 2'-O-methylation is required for mRNA splicing fidelity. Binds U6 snRNAs with a 5'-CAGGG-3' sequence motif. U6 snRNA processing is required for spermatogenesis. This is La-related protein 7 from Mus musculus (Mouse).